The chain runs to 143 residues: Nucleoside diphosphate kinase (143 aa).

Positions 11, 59, 87, 93, 104, and 114 each coordinate ATP. The active-site Pros-phosphohistidine intermediate is the histidine 117.

Belongs to the NDK family. In terms of assembly, homotetramer. Mg(2+) serves as cofactor.

The protein resides in the cytoplasm. It catalyses the reaction dZDP + ATP = dZTP + ADP. The enzyme catalyses a 2'-deoxyribonucleoside 5'-diphosphate + ATP = a 2'-deoxyribonucleoside 5'-triphosphate + ADP. It carries out the reaction a ribonucleoside 5'-diphosphate + ATP = a ribonucleoside 5'-triphosphate + ADP. It participates in purine metabolism. In terms of biological role, major role in the synthesis of nucleoside triphosphates other than ATP. The ATP gamma phosphate is transferred to the NDP beta phosphate via a ping-pong mechanism, using a phosphorylated active-site intermediate. Its function is as follows. (Microbial infection) Catalyzes the phosphorylation of dZDP to dZTP, when the bacterium is infected by a phage that produces the substrate for the synthesis of dZTP (2- amino-2'-deoxyadenosine 5'-triphosphate), which is then used by the phage as a DNA polymerase substrate. The protein is Nucleoside diphosphate kinase of Salmonella paratyphi C (strain RKS4594).